A 148-amino-acid polypeptide reads, in one-letter code: SUMO-conjugating enzyme UBC9 (148 aa).

A UBC core domain is found at 1-147 (MASKRILKEL…ARTWTQKYAM (147 aa)). Catalysis depends on Cys-85, which acts as the Glycyl thioester intermediate.

Belongs to the ubiquitin-conjugating enzyme family. As to quaternary structure, interacts with CHIP. Highest expression in young stems and old leaves. Lowest levels in floral buds, anthers and young leaves.

It participates in protein modification; protein sumoylation. Functionally, accepts the ubiquitin-like protein SUMO/SMT3 from the E1 complex and catalyzes its covalent attachment to other proteins. Mediates the selective degradation of short-lived and abnormal proteins. In Arabidopsis thaliana (Mouse-ear cress), this protein is SUMO-conjugating enzyme UBC9 (UBC9).